Here is an 860-residue protein sequence, read N- to C-terminus: Leucine--tRNA ligase (860 aa).

Positions 42–52 match the 'HIGH' region motif; sequence PYPSGRLHMGH. Residues 619–623 carry the 'KMSKS' region motif; sequence KMSKS. Residue K622 participates in ATP binding.

The protein belongs to the class-I aminoacyl-tRNA synthetase family.

It is found in the cytoplasm. It carries out the reaction tRNA(Leu) + L-leucine + ATP = L-leucyl-tRNA(Leu) + AMP + diphosphate. This Yersinia pseudotuberculosis serotype O:3 (strain YPIII) protein is Leucine--tRNA ligase.